Consider the following 126-residue polypeptide: Aspartate 1-decarboxylase (126 aa).

Ser-25 serves as the catalytic Schiff-base intermediate with substrate; via pyruvic acid. Ser-25 bears the Pyruvic acid (Ser) mark. Thr-57 serves as a coordination point for substrate. Tyr-58 functions as the Proton donor in the catalytic mechanism. A substrate-binding site is contributed by 73 to 75; that stretch reads GAA.

This sequence belongs to the PanD family. Heterooctamer of four alpha and four beta subunits. The cofactor is pyruvate. In terms of processing, is synthesized initially as an inactive proenzyme, which is activated by self-cleavage at a specific serine bond to produce a beta-subunit with a hydroxyl group at its C-terminus and an alpha-subunit with a pyruvoyl group at its N-terminus.

The protein localises to the cytoplasm. The enzyme catalyses L-aspartate + H(+) = beta-alanine + CO2. It functions in the pathway cofactor biosynthesis; (R)-pantothenate biosynthesis; beta-alanine from L-aspartate: step 1/1. Catalyzes the pyruvoyl-dependent decarboxylation of aspartate to produce beta-alanine. The polypeptide is Aspartate 1-decarboxylase (Azotobacter vinelandii (strain DJ / ATCC BAA-1303)).